Here is an 84-residue protein sequence, read N- to C-terminus: Phosphoribosylformylglycinamidine synthase subunit PurS (84 aa).

It belongs to the PurS family. In terms of assembly, homodimer. Part of the FGAM synthase complex composed of 1 PurL, 1 PurQ and 2 PurS subunits.

It localises to the cytoplasm. The enzyme catalyses N(2)-formyl-N(1)-(5-phospho-beta-D-ribosyl)glycinamide + L-glutamine + ATP + H2O = 2-formamido-N(1)-(5-O-phospho-beta-D-ribosyl)acetamidine + L-glutamate + ADP + phosphate + H(+). It participates in purine metabolism; IMP biosynthesis via de novo pathway; 5-amino-1-(5-phospho-D-ribosyl)imidazole from N(2)-formyl-N(1)-(5-phospho-D-ribosyl)glycinamide: step 1/2. Part of the phosphoribosylformylglycinamidine synthase complex involved in the purines biosynthetic pathway. Catalyzes the ATP-dependent conversion of formylglycinamide ribonucleotide (FGAR) and glutamine to yield formylglycinamidine ribonucleotide (FGAM) and glutamate. The FGAM synthase complex is composed of three subunits. PurQ produces an ammonia molecule by converting glutamine to glutamate. PurL transfers the ammonia molecule to FGAR to form FGAM in an ATP-dependent manner. PurS interacts with PurQ and PurL and is thought to assist in the transfer of the ammonia molecule from PurQ to PurL. This is Phosphoribosylformylglycinamidine synthase subunit PurS from Methanothermobacter thermautotrophicus (strain ATCC 29096 / DSM 1053 / JCM 10044 / NBRC 100330 / Delta H) (Methanobacterium thermoautotrophicum).